We begin with the raw amino-acid sequence, 1204 residues long: Cingulin (1204 aa).

The interval 7–357 (MAEPRGPVDH…GVISSGSSKA (351 aa)) is head. The segment at 25–48 (EPVSGAEMGTLRRGGRRPAKDARA) is disordered. The ZIM motif lies at 48 to 62 (ASTYGVAVRVQGIAG). The interaction with TJP1/ZO1 stretch occupies residues 54–67 (AVRVQGIAGQPFVV). 2 disordered regions span residues 68–174 (LNSG…DTAP) and 186–266 (DGQL…FSRA). Residues 93 to 119 (ALSSDSELPENPYSQVQGFPAPSQSST) are compositionally biased toward polar residues. Phosphoserine is present on residues Ser95, Ser96, Ser98, Ser135, Ser137, Ser140, Ser155, Ser165, Ser214, and Ser217. Residues 207 to 231 (EQRKRSKSLDSRLPRDTLEERERQS) are compositionally biased toward basic and acidic residues. Residues 232–245 (TNHWNPSTKYNNHV) are compositionally biased toward polar residues. Residues 247–261 (SLKQPAQSPSPSPLS) show a composition bias toward low complexity. 4 positions are modified to phosphoserine: Ser258, Ser276, Ser338, and Ser351. The stretch at 358 to 1161 (MAGQGELARK…SLEKDSWRKA (804 aa)) forms a coiled coil. Residues 379 to 398 (VKKRQKLEPSRAGLERQLEE) form a disordered region. An N6-acetyllysine modification is found at Lys579. A disordered region spans residues 1161–1182 (ASRSAAESALKHEGLSSDEEFD). Residues 1162–1204 (SRSAAESALKHEGLSSDEEFDSVYDPSSIASLLTESNLQTSSC) form a tail region. Phosphoserine occurs at positions 1176, 1177, and 1183.

This sequence belongs to the cingulin family. As to quaternary structure, homodimer. Interacts with TJP1/ZO1 and SPEF1.

The protein resides in the cell junction. It localises to the tight junction. Functionally, probably plays a role in the formation and regulation of the tight junction (TJ) paracellular permeability barrier. This is Cingulin from Plecturocebus moloch (Dusky titi monkey).